The following is a 231-amino-acid chain: Putative cobalt transport protein CbiM 1 (231 aa).

Helical transmembrane passes span 8–28 (LPLQ…AYGI), 41–61 (TLPL…LKMP), 74–94 (GLGA…IVLV), 97–117 (ALFL…SMGI), 138–158 (IVNV…ITSI), and 175–195 (FITF…IEGI).

It belongs to the CbiM family. Forms an energy-coupling factor (ECF) transporter complex composed of an ATP-binding protein (A component, CbiO), a transmembrane protein (T component, CbiQ) and 2 possible substrate-capture proteins (S components, CbiM and CbiN) of unknown stoichimetry.

It is found in the cell membrane. The protein operates within cofactor biosynthesis; adenosylcobalamin biosynthesis. Part of the energy-coupling factor (ECF) transporter complex CbiMNOQ involved in cobalt import. In Methanosphaerula palustris (strain ATCC BAA-1556 / DSM 19958 / E1-9c), this protein is Putative cobalt transport protein CbiM 1.